Here is a 484-residue protein sequence, read N- to C-terminus: Glutamyl-tRNA(Gln) amidotransferase subunit A (484 aa).

Residues Lys-76 and Ser-151 each act as charge relay system in the active site. Ser-175 (acyl-ester intermediate) is an active-site residue.

It belongs to the amidase family. GatA subfamily. As to quaternary structure, heterotrimer of A, B and C subunits.

It carries out the reaction L-glutamyl-tRNA(Gln) + L-glutamine + ATP + H2O = L-glutaminyl-tRNA(Gln) + L-glutamate + ADP + phosphate + H(+). Its function is as follows. Allows the formation of correctly charged Gln-tRNA(Gln) through the transamidation of misacylated Glu-tRNA(Gln) in organisms which lack glutaminyl-tRNA synthetase. The reaction takes place in the presence of glutamine and ATP through an activated gamma-phospho-Glu-tRNA(Gln). The chain is Glutamyl-tRNA(Gln) amidotransferase subunit A from Hahella chejuensis (strain KCTC 2396).